We begin with the raw amino-acid sequence, 337 residues long: Lipoyl synthase (337 aa).

[4Fe-4S] cluster contacts are provided by cysteine 81, cysteine 86, cysteine 92, cysteine 107, cysteine 111, cysteine 114, and serine 323. The region spanning 93–312 (FSHGTATFMI…EDYGNALGFS (220 aa)) is the Radical SAM core domain.

Belongs to the radical SAM superfamily. Lipoyl synthase family. [4Fe-4S] cluster serves as cofactor.

It localises to the cytoplasm. It catalyses the reaction [[Fe-S] cluster scaffold protein carrying a second [4Fe-4S](2+) cluster] + N(6)-octanoyl-L-lysyl-[protein] + 2 oxidized [2Fe-2S]-[ferredoxin] + 2 S-adenosyl-L-methionine + 4 H(+) = [[Fe-S] cluster scaffold protein] + N(6)-[(R)-dihydrolipoyl]-L-lysyl-[protein] + 4 Fe(3+) + 2 hydrogen sulfide + 2 5'-deoxyadenosine + 2 L-methionine + 2 reduced [2Fe-2S]-[ferredoxin]. The protein operates within protein modification; protein lipoylation via endogenous pathway; protein N(6)-(lipoyl)lysine from octanoyl-[acyl-carrier-protein]: step 2/2. Catalyzes the radical-mediated insertion of two sulfur atoms into the C-6 and C-8 positions of the octanoyl moiety bound to the lipoyl domains of lipoate-dependent enzymes, thereby converting the octanoylated domains into lipoylated derivatives. The protein is Lipoyl synthase of Xanthomonas euvesicatoria pv. vesicatoria (strain 85-10) (Xanthomonas campestris pv. vesicatoria).